A 508-amino-acid chain; its full sequence is MAQQPLLSLPEFQSVSTGTLVVKEPLNFWGGARVKPRDTKNSEPVYEPATGRVLCDMIPCGEEEVDQAIKSAHSAYLKWSQLSGMERSRIMLEAARIIRERRNAIAKAEVANNGKSITEAEVDIDVAWQCIEYYAGIAPTLSGQHIQLPGGSFAYTRREPLGVCVGIGAWNYPFQIAAWKSAPALACGNAMVFKPSPMTPVTAVMLAEIYKEAGVPDGLFNVVQGGAETGSLLCHHPMVAKVSFTGSVPTGKKVMEMAAKSVKQVTLELGGKSPLIIFKDCELENAIKGALMANFLTQGEVCCNGTRVFVQREIMPKFLEEVVKRTKAISVGDPLCEGTRMGALISKPHMEKVLGFIKQAKEQGGKVLCGGERFVPNDPKLKDGYFVSPCVLDNCRDDMTCVKEEIFGPVMSVLPFDTEEEVLQRANNTTFGLASGVFTRDIARAHRVAANLQAGTCYINNYNVGPVEVPFGGYKMSGFGRENGTVTIEYYSQLKTVVVEMGDVESLF.

NAD(+)-binding positions include lysine 194 and glycine 246–threonine 250. Glutamate 268 serves as the catalytic Proton acceptor. The Nucleophile role is filled by cysteine 302. Glutamate 405 lines the NAD(+) pocket.

It belongs to the aldehyde dehydrogenase family. Homotetramer.

The protein resides in the cytoplasm. Its subcellular location is the cytosol. The catalysed reaction is 4-(trimethylamino)butanal + NAD(+) + H2O = 4-(trimethylamino)butanoate + NADH + 2 H(+). The enzyme catalyses an aldehyde + NAD(+) + H2O = a carboxylate + NADH + 2 H(+). The protein operates within amine and polyamine biosynthesis; carnitine biosynthesis. In terms of biological role, converts gamma-trimethylaminobutyraldehyde into gamma-butyrobetaine with high efficiency (in vitro). Can catalyze the irreversible oxidation of a broad range of aldehydes to the corresponding acids in an NAD-dependent reaction, but with low efficiency. This chain is 4-trimethylaminobutyraldehyde dehydrogenase A (aldh9a1a), found in Danio rerio (Zebrafish).